Consider the following 566-residue polypeptide: MKPVWVIILGWILLVPRVGTAWRGPPEEASFYYGTFPPGFSWGVGSSAYQTEGAWDEDGKGPSIWDAFTHGRKEQVLGGDTADTACDSYYKVQEDIALLKELQVSHYRFSLSWPRLLPTGVRAEQVNKRGIKFYSDFIDALLKSNITPVVTLHHWDLPQMLQVAYGGWQNVSMTRYFSDYADLCFEVFGDRVKHWLTFSDPRTMVEKGYETGLHAPGLRLQGTGLYVAAHHIIKAHAQAWHSYNNTWRSKQHGLVGISLNCDWGEPVDIDNPDDIEAAERYLQFCLGWFANPIYAGDYPQVMKDHIGTKSAEQGLEMSRLPTFSLQEKSYLKGTSDFLGLGHFTTRYITQRKYPSHQGPSYQNDRDLVELVDPNWPEMGSPWLYSVPWGFRRLLNFAQTQYGDPPIYVTESGAPQKLHCTQFCDEWRIQYLKGYINEMLKAIKDGVDIKGYTSWSLLDKFEWEKGYADKYGFYYVEFNVRNKPRYPKASVQYYKEIITASGFPNPQEVESWRLKALETCSINNQMLATEPLLRHMHVASEIVVPTVCALSILTAALMLTLLLRRRG.

An N-terminal signal peptide occupies residues 1 to 20 (MKPVWVIILGWILLVPRVGT). Topologically, residues 21 to 540 (AWRGPPEEAS…LLRHMHVASE (520 aa)) are extracellular. N-linked (GlcNAc...) asparagine glycans are attached at residues Asn170 and Asn244. A helical transmembrane segment spans residues 541–561 (IVVPTVCALSILTAALMLTLL). The Cytoplasmic segment spans residues 562–566 (LRRRG).

Belongs to the glycosyl hydrolase 1 family. Klotho subfamily. In terms of assembly, may form dimers. As to expression, strongly expressed in the lens of the eye, where it localizes to the equatorial epithelium and outer layers of newly extending fiber cells (at protein level). May also be expressed in kidney and skin. However, another study suggests that expression is specific to eye and is minimal in other tissues.

Its subcellular location is the endoplasmic reticulum membrane. Plays a role in formation of the lens suture in the eye, which is important for normal optical properties of the lens. This chain is Lactase-like protein (Lctl), found in Mus musculus (Mouse).